The primary structure comprises 417 residues: Squamosa promoter-binding-like protein 14 (417 aa).

Composition is skewed to gly residues over residues 1–26 (MEMA…GGGG) and 51–60 (AGGGGTGSGS). Disordered stretches follow at residues 1-32 (MEMA…EHRQ) and 51-102 (AGGG…PPPP). Positions 61 to 74 (GSASAAPPSSSSKA) are enriched in low complexity. The segment covering 75–84 (AGGGRGGGGK) has biased composition (gly residues). Residues 101–178 (PPRCQVEGCG…AGHNERRRRP (78 aa)) form an SBP-type zinc finger. Zn(2+) is bound by residues Cys104, Cys109, Cys126, His129, Cys145, Cys148, and His152. Residues 161–177 (KRSCRRRLAGHNERRRR) carry the Bipartite nuclear localization signal motif. At Ser163 the chain carries Phosphoserine. Residue Cys164 coordinates Zn(2+). The disordered stretch occupies residues 387–417 (LQGNGPAPAPRIDPGSGSTFDQTSNTMDWSL). Over residues 402-417 (SGSTFDQTSNTMDWSL) the composition is skewed to polar residues.

Interacts with PCF1 and PCF2. Interacts with IPI1. Interacts with D53. Interacts with SLR1. Interacts (via C-terminus) with SHI1. Phosphorylated at Ser-163 in response to infection by the fungal pathogen Magnaporthe oryzae. In terms of processing, ubiquitinated by IPI1, which leads to proteasomal degradation. As to expression, expressed in young panicles. Expressed in the shoot apex at both the vegetative and reproductive stages. Highly expressed in the promordia of primary and secondary branches. Highly expressed in young panicles.

Its subcellular location is the nucleus. Its function is as follows. Transcriptional activator that binds to the SBP-box DNA core binding motif 5'-GTAC-3'. Can target the TCP motif 5'-TGGGCC/T-3' through interaction with PCF1 and PCF2. Key regulator of the plant architecture that controls shoot branching and panicle development. Promotes panicle branching. Promotes high grain yield. Binds to the promoters of TB1 and DEP1. Suppresses rice tillering mainly through positive regulation of TB1. Regulates plant height and panicle length through positive regulation of DEP1. Repressed by D53 in strigolactone (SL) signaling. Acts with D53 to mediate the SL-regulated tiller development. Functions as a direct downstream component of D53 in regulating tiller number and SL-induced gene expression. Binds directly to the D53 promoter and plays a critical role in the negative feedback regulation of SL-induced D53 expression. Involved in defense response against pathogens. Phosphorylated at Ser-163 in response to infection by the fungal pathogen Magnaporthe oryzae. Phosphorylation reduces SPL14/IPA1 binding to the GTAC site in the DEP1 promoter and enhances binding to the TGGGCC site in the WRKY45 promoter. Binding to the promoter of the pathogen defense gene WRKY45 activates its expression, leading to enhanced disease resistance. Reduces gibberellin-mediated disease susceptibility by stabilizing SLR1. Possesses transactivation activity in yeast cells. In Oryza sativa subsp. japonica (Rice), this protein is Squamosa promoter-binding-like protein 14.